A 1090-amino-acid chain; its full sequence is UPF0507 protein SCRG_01893 (1090 aa).

The VPS9 domain occupies phenylalanine 289–asparagine 436.

Belongs to the UPF0507 family.

This is UPF0507 protein SCRG_01893 from Saccharomyces cerevisiae (strain RM11-1a) (Baker's yeast).